The primary structure comprises 27 residues: uncharacterized protein (27 aa).

Residues 6-26 (IIVLGALIALLELIRFLLQLL) form a helical membrane-spanning segment.

It belongs to the DinQ family.

Its subcellular location is the cell inner membrane. This is an uncharacterized protein from Escherichia coli (strain K12).